A 397-amino-acid chain; its full sequence is Elongation factor Tu (397 aa).

The region spanning 10 to 207 (KPHVNIGTIG…AVDESIPDPV (198 aa)) is the tr-type G domain. The tract at residues 19-26 (GHVDHGKT) is G1. Position 19 to 26 (19 to 26 (GHVDHGKT)) interacts with GTP. Threonine 26 is a binding site for Mg(2+). The interval 63 to 67 (GITIN) is G2. Positions 84–87 (DAPG) are G3. GTP-binding positions include 84-88 (DAPGH) and 139-142 (NKAD). Residues 139-142 (NKAD) are G4. A G5 region spans residues 177-179 (SGL).

It belongs to the TRAFAC class translation factor GTPase superfamily. Classic translation factor GTPase family. EF-Tu/EF-1A subfamily. Monomer.

It is found in the cytoplasm. It catalyses the reaction GTP + H2O = GDP + phosphate + H(+). Its function is as follows. GTP hydrolase that promotes the GTP-dependent binding of aminoacyl-tRNA to the A-site of ribosomes during protein biosynthesis. The protein is Elongation factor Tu of Tropheryma whipplei (strain TW08/27) (Whipple's bacillus).